Consider the following 366-residue polypeptide: tRNA/tmRNA (uracil-C(5))-methyltransferase (366 aa).

S-adenosyl-L-methionine is bound by residues Gln-190, Tyr-218, Asn-223, Glu-239, and Asp-299. Catalysis depends on Cys-324, which acts as the Nucleophile. Glu-358 acts as the Proton acceptor in catalysis.

The protein belongs to the class I-like SAM-binding methyltransferase superfamily. RNA M5U methyltransferase family. TrmA subfamily.

The catalysed reaction is uridine(54) in tRNA + S-adenosyl-L-methionine = 5-methyluridine(54) in tRNA + S-adenosyl-L-homocysteine + H(+). The enzyme catalyses uridine(341) in tmRNA + S-adenosyl-L-methionine = 5-methyluridine(341) in tmRNA + S-adenosyl-L-homocysteine + H(+). In terms of biological role, dual-specificity methyltransferase that catalyzes the formation of 5-methyluridine at position 54 (m5U54) in all tRNAs, and that of position 341 (m5U341) in tmRNA (transfer-mRNA). This chain is tRNA/tmRNA (uracil-C(5))-methyltransferase, found in Salmonella paratyphi A (strain ATCC 9150 / SARB42).